Consider the following 343-residue polypeptide: Dihydroorotase (343 aa).

Residues His-14 and His-16 each coordinate Zn(2+). Substrate is bound by residues 16–18 and Asn-42; that span reads HVR. Zn(2+)-binding residues include Lys-98, His-135, and His-173. N6-carboxylysine is present on Lys-98. Substrate is bound at residue His-135. Position 219 (Leu-219) interacts with substrate. Asp-247 contributes to the Zn(2+) binding site. The active site involves Asp-247. The substrate site is built by His-251 and Ala-263.

It belongs to the metallo-dependent hydrolases superfamily. DHOase family. Class II DHOase subfamily. In terms of assembly, homodimer. Zn(2+) is required as a cofactor.

The enzyme catalyses (S)-dihydroorotate + H2O = N-carbamoyl-L-aspartate + H(+). Its pathway is pyrimidine metabolism; UMP biosynthesis via de novo pathway; (S)-dihydroorotate from bicarbonate: step 3/3. Catalyzes the reversible cyclization of carbamoyl aspartate to dihydroorotate. The protein is Dihydroorotase of Marinobacter nauticus (strain ATCC 700491 / DSM 11845 / VT8) (Marinobacter aquaeolei).